Here is a 218-residue protein sequence, read N- to C-terminus: Runt-related transcription factor 2 (218 aa).

In terms of domain architecture, Runt spans R67–R195. Residues V122 to S138 are required for interaction with FOXO1. The tract at residues G189–I218 is disordered. A Glycyl lysine isopeptide (Lys-Gly) (interchain with G-Cter in SUMO2) cross-link involves residue K204.

As to quaternary structure, heterodimer of an alpha and a beta subunit. The alpha subunit binds DNA as a monomer and through the Runt domain. DNA-binding is increased by heterodimerization. Interacts with XRCC6 (Ku70) and XRCC5 (Ku80). Interacts with CCNB1, KAT6A and KAT6B. Interacts with HIVEP3. Interacts with IFI204. Interaction with SATB2; the interaction results in enhanced DNA binding and transactivation by these transcription factors. Binds to HIPK3. Interacts with FOXO1 (via a C-terminal region); the interaction inhibits RUNX2 transcriptional activity towards BGLAP. Interacts with FOXP3. Interacts with TMEM119. Interacts with OLFM2. Interacts with IPO7; the interaction inhibits RUNX2 nuclear translocation in osteoblasts. In terms of processing, phosphorylated; probably by MAP kinases (MAPK). Phosphorylation by HIPK3 is required for the SPEN/MINT and FGF2 transactivation during osteoblastic differentiation.

It is found in the nucleus. Its subcellular location is the cytoplasm. Its function is as follows. Transcription factor involved in osteoblastic differentiation and skeletal morphogenesis. Essential for the maturation of osteoblasts and both intramembranous and endochondral ossification. CBF binds to the core site, 5'-PYGPYGGT-3', of a number of enhancers and promoters, including murine leukemia virus, polyomavirus enhancer, T-cell receptor enhancers, osteocalcin, osteopontin, bone sialoprotein, alpha 1(I) collagen, LCK, IL-3 and GM-CSF promoters. Inhibits KAT6B-dependent transcriptional activation. In osteoblasts, supports transcription activation: synergizes with SPEN/MINT to enhance FGFR2-mediated activation of the osteocalcin FGF-responsive element (OCFRE). The sequence is that of Runt-related transcription factor 2 (Runx2) from Rattus norvegicus (Rat).